A 555-amino-acid polypeptide reads, in one-letter code: MFS-type transporter VdtG (555 aa).

The disordered stretch occupies residues 1 to 20 (MNGNGTADKPGPPGGKPFGP). Asn-4 is a glycosylation site (N-linked (GlcNAc...) asparagine). The next 3 helical transmembrane spans lie at 30–50 (TGFK…LTAL), 71–91 (DIGW…LLFG), and 101–121 (WVFL…GAAP). An N-linked (GlcNAc...) asparagine glycan is attached at Asn-122. 2 consecutive transmembrane segments (helical) span residues 132–152 (IAGL…FFTV) and 162–182 (GIAG…GGGF). Residue Asn-185 is glycosylated (N-linked (GlcNAc...) asparagine). 4 helical membrane-spanning segments follow: residues 190 to 210 (WCFY…LLFL), 232 to 252 (LGNL…QWGG), 262 to 282 (IVAL…VQLW), and 304 to 324 (AFTI…PIWF). Asn-329 is a glycosylation site (N-linked (GlcNAc...) asparagine). 5 consecutive transmembrane segments (helical) span residues 337–357 (VMML…GFII), 364–384 (TPFM…LTTF), 393–413 (WIGY…QASL), 425–445 (PIGI…FLAV), and 497–517 (LMDV…AAAF). Residues 528 to 555 (AAGPGGPGGPGGPGGPGGPEGLRGGNKV) are disordered. Residues 530-555 (GPGGPGGPGGPGGPGGPEGLRGGNKV) show a composition bias toward gly residues.

This sequence belongs to the major facilitator superfamily. TCR/Tet family.

It is found in the endoplasmic reticulum membrane. MFS-type transporter; part of the gene cluster that mediates the biosynthesis of viriditoxin, one of the 'classical' secondary metabolites produced by fungi and that has antibacterial activity. Is not essential for viriditoxin production. The sequence is that of MFS-type transporter VdtG from Byssochlamys spectabilis (Paecilomyces variotii).